The primary structure comprises 578 residues: Protein SIA1 (578 aa).

The first 28 residues, 1-28 (MFRNRRILLYARRFFLVWICFLFITSWS), serve as a signal peptide directing secretion.

In terms of biological role, may be involved in the activation of the plasma membrane proton-ATPase by glucose. The sequence is that of Protein SIA1 (SIA1) from Kluyveromyces lactis (strain ATCC 8585 / CBS 2359 / DSM 70799 / NBRC 1267 / NRRL Y-1140 / WM37) (Yeast).